Here is a 759-residue protein sequence, read N- to C-terminus: uncharacterized protein (759 aa).

Disordered regions lie at residues 1–31 and 188–211; these read MDGN…TSFQ and NDEG…PFAN. Residues 17-31 are compositionally biased toward low complexity; that stretch reads LSPLQTSFPSSTSFQ. The segment covering 189–207 has biased composition (acidic residues); sequence DEGEDVKDNEQDDNIDESD. 10 helical membrane passes run 434–454, 456–476, 486–505, 517–537, 555–575, 597–617, 620–640, 643–663, 670–690, and 726–746; these read YFRT…ILPM, FQGG…VGIL, MYNS…LSRA, FCFS…YIVL, MFYA…GAAL, DKWK…VNQA, SQWP…YFTA, FGSN…LGNI, GVAF…GLAA, and LVMV…ALVV.

This sequence belongs to the ThrE exporter (TC 2.A.79) family.

It localises to the endoplasmic reticulum membrane. This is an uncharacterized protein from Schizosaccharomyces pombe (strain 972 / ATCC 24843) (Fission yeast).